A 371-amino-acid polypeptide reads, in one-letter code: Cytochrome b (371 aa).

The next 4 membrane-spanning stretches (helical) occupy residues 25–45 (FGSMLLACLALQVLTGFFLAV), 69–90 (WMMQNLHAIGASMFFICIYIHI), 105–125 (WMSGITLLITLMATAFFGYVL), and 170–190 (FFALHFILPFAIISMSSLHII). The heme b site is built by histidine 75 and histidine 89. Residues histidine 174 and histidine 188 each contribute to the heme b site. Histidine 193 is an a ubiquinone binding site. Transmembrane regions (helical) follow at residues 218-238 (YKDLLFLTLMILFMLIIVSFF), 280-300 (LGGALALVMSIMILFIIPFTH), 312-332 (LSQLMFWTLVSTFITITWAAT), and 339-358 (YIIISQVTATLYFIFFISMP).

It belongs to the cytochrome b family. In terms of assembly, the cytochrome bc1 complex contains 3 respiratory subunits (MT-CYB, CYC1 and UQCRFS1), 2 core proteins (UQCRC1 and UQCRC2) and probably 6 low-molecular weight proteins. The cofactor is heme b.

Its subcellular location is the mitochondrion inner membrane. Functionally, component of the ubiquinol-cytochrome c reductase complex (complex III or cytochrome b-c1 complex) that is part of the mitochondrial respiratory chain. The b-c1 complex mediates electron transfer from ubiquinol to cytochrome c. Contributes to the generation of a proton gradient across the mitochondrial membrane that is then used for ATP synthesis. This chain is Cytochrome b (MT-CYB), found in Python molurus (Indian python).